The sequence spans 20 residues: Poneritoxin (20 aa).

M18 is modified (methionine sulfoxide; in form U1-PONTX-Dq3c). Position 19 is a lysine amide; in form U1-PONTX-Dq3a and U1-PONTX-Dq3c (K19).

In terms of processing, the peptide spanning residues 2 to 19 occurs in 3 forms and has been given 3 different names. U1-PONTX-Dq3a has an amidated Lys-19, U1-PONTX-Dq3c has an amidated Lys-19 and an oxidized Met-18, and U1-PONTX-Dq3b has no modifications at either Met-18 or Lys-19. As to expression, expressed by the venom gland.

The protein resides in the secreted. May have antimicrobial properties, like most ant linear peptides. This is Poneritoxin from Dinoponera quadriceps (South American ant).